The primary structure comprises 365 residues: Transmembrane protein 25 (365 aa).

The first 26 residues, 1–26 (MELPLSQATLRHTLLLLPALLSSGQG), serve as a signal peptide directing secretion. The Extracellular portion of the chain corresponds to 27–232 (ELAPQIDGQT…APGLLATRIE (206 aa)). Residues 30-123 (PQIDGQTWAE…SGRPANASVI (94 aa)) form the Ig-like domain. A disulfide bridge connects residues cysteine 52 and cysteine 107. Asparagine 106, asparagine 162, asparagine 192, and asparagine 205 each carry an N-linked (GlcNAc...) asparagine glycan. A helical transmembrane segment spans residues 233–253 (VPLLGIVVAGGLALGTLVGFS). Topologically, residues 254-365 (TLVACLVCRK…SSVSSDEIWL (112 aa)) are cytoplasmic.

Interacts with GRIN2B. Expressed throughout the brain with higher levels within the hippocampus.

The protein localises to the late endosome. It localises to the lysosome. The protein resides in the cell membrane. It is found in the secreted. In terms of biological role, in neurons, modulates the degradation of NMDA receptor GRIN2B subunit. Plays a role in the regulation of neuronal excitability. The sequence is that of Transmembrane protein 25 from Mus musculus (Mouse).